The following is an 889-amino-acid chain: Mitochondrial intermediate peptidase (889 aa).

The N-terminal 30 residues, 1 to 30 (MASTSKNAQRAAASVAHSYHVCLARRMSRL), are a transit peptide targeting the mitochondrion. Positions 60–112 (SSSLAAQRVQRPTSAGPILTNPISDHEKDNDELRSLFDAPPTSSSANHLRSSG) are disordered. Residues 83–94 (SDHEKDNDELRS) are compositionally biased toward basic and acidic residues. A compositionally biased stretch (polar residues) spans 100 to 112 (PTSSSANHLRSSG). H670 contributes to the Zn(2+) binding site. Residue E671 is part of the active site. Zn(2+) is bound by residues H674 and H677.

The protein belongs to the peptidase M3 family. Zn(2+) serves as cofactor.

It localises to the mitochondrion matrix. The catalysed reaction is Release of an N-terminal octapeptide as second stage of processing of some proteins imported into the mitochondrion.. Cleaves proteins, imported into the mitochondrion, to their mature size. While most mitochondrial precursor proteins are processed to the mature form in one step by mitochondrial processing peptidase (MPP), the sequential cleavage by MIP of an octapeptide after initial processing by MPP is a required step for a subgroup of nuclear-encoded precursor proteins destined for the matrix or the inner membrane. This Mycosarcoma maydis (Corn smut fungus) protein is Mitochondrial intermediate peptidase (OCT1).